The sequence spans 242 residues: Probable pectate lyase D (242 aa).

The N-terminal stretch at 1–17 (MYQKSLLFSLLASSALA) is a signal peptide. N-linked (GlcNAc...) asparagine glycosylation is present at Asn216. Residues 217–242 (DTGAEPEEISEGPSDACQYSEPLSSC) are disordered.

Belongs to the polysaccharide lyase 3 family. Requires Ca(2+) as cofactor.

It localises to the secreted. The catalysed reaction is Eliminative cleavage of (1-&gt;4)-alpha-D-galacturonan to give oligosaccharides with 4-deoxy-alpha-D-galact-4-enuronosyl groups at their non-reducing ends.. Its function is as follows. Pectinolytic enzyme consist of four classes of enzymes: pectin lyase, polygalacturonase, pectin methylesterase and rhamnogalacturonase. Among pectinolytic enzymes, pectin lyase is the most important in depolymerization of pectin, since it cleaves internal glycosidic bonds of highly methylated pectins. Favors pectate, the anion, over pectin, the methyl ester. The protein is Probable pectate lyase D (plyD) of Aspergillus fumigatus (strain CBS 144.89 / FGSC A1163 / CEA10) (Neosartorya fumigata).